The primary structure comprises 521 residues: Maturase K (521 aa).

The protein belongs to the intron maturase 2 family. MatK subfamily.

Its subcellular location is the plastid. It is found in the chloroplast. Its function is as follows. Usually encoded in the trnK tRNA gene intron. Probably assists in splicing its own and other chloroplast group II introns. The chain is Maturase K from Trillium catesbaei (Catesby's trillium).